We begin with the raw amino-acid sequence, 528 residues long: Exodeoxyribonuclease 7 large subunit (528 aa).

Residues 486-528 (QGDRDAVIDGESSGVLPPSAAPAPTRPTPRPKPASSSDQGSLF) are disordered. The segment covering 504–517 (SAAPAPTRPTPRPK) has biased composition (pro residues).

Belongs to the XseA family. Heterooligomer composed of large and small subunits.

Its subcellular location is the cytoplasm. It carries out the reaction Exonucleolytic cleavage in either 5'- to 3'- or 3'- to 5'-direction to yield nucleoside 5'-phosphates.. Bidirectionally degrades single-stranded DNA into large acid-insoluble oligonucleotides, which are then degraded further into small acid-soluble oligonucleotides. The polypeptide is Exodeoxyribonuclease 7 large subunit (Caulobacter sp. (strain K31)).